The sequence spans 362 residues: tRNA/tmRNA (uracil-C(5))-methyltransferase (362 aa).

S-adenosyl-L-methionine-binding residues include glutamine 186, tyrosine 214, asparagine 219, glutamate 235, and aspartate 295. The active-site Nucleophile is cysteine 320. Glutamate 354 serves as the catalytic Proton acceptor.

It belongs to the class I-like SAM-binding methyltransferase superfamily. RNA M5U methyltransferase family. TrmA subfamily.

The catalysed reaction is uridine(54) in tRNA + S-adenosyl-L-methionine = 5-methyluridine(54) in tRNA + S-adenosyl-L-homocysteine + H(+). The enzyme catalyses uridine(341) in tmRNA + S-adenosyl-L-methionine = 5-methyluridine(341) in tmRNA + S-adenosyl-L-homocysteine + H(+). Its function is as follows. Dual-specificity methyltransferase that catalyzes the formation of 5-methyluridine at position 54 (m5U54) in all tRNAs, and that of position 341 (m5U341) in tmRNA (transfer-mRNA). In Ectopseudomonas mendocina (strain ymp) (Pseudomonas mendocina), this protein is tRNA/tmRNA (uracil-C(5))-methyltransferase.